We begin with the raw amino-acid sequence, 422 residues long: Histidine--tRNA ligase (422 aa).

The protein belongs to the class-II aminoacyl-tRNA synthetase family. As to quaternary structure, homodimer.

It localises to the cytoplasm. It catalyses the reaction tRNA(His) + L-histidine + ATP = L-histidyl-tRNA(His) + AMP + diphosphate + H(+). This is Histidine--tRNA ligase from Mycolicibacterium vanbaalenii (strain DSM 7251 / JCM 13017 / BCRC 16820 / KCTC 9966 / NRRL B-24157 / PYR-1) (Mycobacterium vanbaalenii).